The primary structure comprises 317 residues: Glutathione synthetase (317 aa).

Residues 125–311 (EKMFATLFPQ…IGGKLMDAID (187 aa)) form the ATP-grasp domain. 152–208 (TAKHADVILKPLDGMGGTSIFRHRAGDPNLSVILETLTALGTQQIMAQAYLPAIKDG) contributes to the ATP binding site. 2 residues coordinate Mg(2+): glutamate 282 and asparagine 284.

This sequence belongs to the prokaryotic GSH synthase family. It depends on Mg(2+) as a cofactor. Mn(2+) serves as cofactor.

The enzyme catalyses gamma-L-glutamyl-L-cysteine + glycine + ATP = glutathione + ADP + phosphate + H(+). It participates in sulfur metabolism; glutathione biosynthesis; glutathione from L-cysteine and L-glutamate: step 2/2. The chain is Glutathione synthetase from Pseudomonas putida (strain ATCC 47054 / DSM 6125 / CFBP 8728 / NCIMB 11950 / KT2440).